A 426-amino-acid polypeptide reads, in one-letter code: Histidine--tRNA ligase (426 aa).

Belongs to the class-II aminoacyl-tRNA synthetase family. Homodimer.

It is found in the cytoplasm. The enzyme catalyses tRNA(His) + L-histidine + ATP = L-histidyl-tRNA(His) + AMP + diphosphate + H(+). This Streptococcus pyogenes serotype M18 (strain MGAS8232) protein is Histidine--tRNA ligase.